Consider the following 115-residue polypeptide: Ribonuclease P protein component (115 aa).

Belongs to the RnpA family. In terms of assembly, consists of a catalytic RNA component (M1 or rnpB) and a protein subunit.

It catalyses the reaction Endonucleolytic cleavage of RNA, removing 5'-extranucleotides from tRNA precursor.. Its function is as follows. RNaseP catalyzes the removal of the 5'-leader sequence from pre-tRNA to produce the mature 5'-terminus. It can also cleave other RNA substrates such as 4.5S RNA. The protein component plays an auxiliary but essential role in vivo by binding to the 5'-leader sequence and broadening the substrate specificity of the ribozyme. This is Ribonuclease P protein component from Bacillus mycoides (strain KBAB4) (Bacillus weihenstephanensis).